Here is a 369-residue protein sequence, read N- to C-terminus: Protein RecA (369 aa).

ATP is bound at residue 77 to 84 (GPESSGKT).

The protein belongs to the RecA family.

Its subcellular location is the cytoplasm. Can catalyze the hydrolysis of ATP in the presence of single-stranded DNA, the ATP-dependent uptake of single-stranded DNA by duplex DNA, and the ATP-dependent hybridization of homologous single-stranded DNAs. It interacts with LexA causing its activation and leading to its autocatalytic cleavage. In Corynebacterium pseudotuberculosis (strain C231), this protein is Protein RecA.